Here is a 117-residue protein sequence, read N- to C-terminus: uncharacterized protein (117 aa).

An N-terminal signal peptide occupies residues methionine 1–serine 20.

This is an uncharacterized protein from Saccharomyces cerevisiae (strain ATCC 204508 / S288c) (Baker's yeast).